Here is a 493-residue protein sequence, read N- to C-terminus: Calcium-binding tyrosine phosphorylation-regulated protein (493 aa).

An RIIa domain is found at 12-49 (YGLKTLLEGISRAVLKTNPSNINQFAAAYFQELTMYRG). 4 disordered regions span residues 85-164 (EPGK…VSPE), 244-271 (DLGS…QEPP), 330-354 (NEQS…TTSG), and 426-493 (IVSD…STAE). Over residues 90–100 (SVESKVPTQME) the composition is skewed to polar residues. Residues 101-117 (KSTDTDEDNVTRTEYSD) show a composition bias toward basic and acidic residues. The segment covering 141–152 (SSKPATPKTTTP) has biased composition (low complexity). Threonine 151 is subject to Phosphothreonine. The residue at position 155 (serine 155) is a Phosphoserine. 2 stretches are compositionally biased toward polar residues: residues 426–442 (IVSD…NSVP) and 461–470 (SGTSVKSSSG). Residues 484–493 (IEPEGESTAE) are compositionally biased toward acidic residues.

As to quaternary structure, interacts with FSCB. Isoform 3 self-associates. Isoform 3 and isoform 5 interact with GSK3B. Isoform 1 does not interact with GSK3B. In terms of processing, isoform 1 is phosphorylated on tyrosine residues during in vitro capacitation. Isoform 3 and isoform 5 are phosphorylated by GSK3B in vitro. Dephosphorylation affects its ability to bind calcium. In terms of tissue distribution, expressed in elongating spermatids and spermatozoa (at protein level). Isoform 1 is expressed in testis. Isoform 3 and isoform 5 are also expressed in brain, pancreas and numerous brain tumors.

The protein localises to the cytoplasm. Its subcellular location is the cytoskeleton. It is found in the cell projection. The protein resides in the cilium. It localises to the flagellum. The protein localises to the nucleus. Functionally, may function as a regulator of both motility- and head-associated functions such as capacitation and the acrosome reaction. Isoform 1 binds calcium in vitro. Isoform 2 and isoform 6 probably bind calcium. Isoform 3 and isoform 5 do not bind calcium in vitro. Isoform 4 probably does not bind calcium. The polypeptide is Calcium-binding tyrosine phosphorylation-regulated protein (CABYR) (Homo sapiens (Human)).